The primary structure comprises 540 residues: Chaperonin GroEL (540 aa).

ATP is bound by residues 30 to 33 (TLGP), lysine 51, 87 to 91 (DGTTT), glycine 415, and aspartate 495.

The protein belongs to the chaperonin (HSP60) family. In terms of assembly, forms a cylinder of 14 subunits composed of two heptameric rings stacked back-to-back. Interacts with the co-chaperonin GroES.

It localises to the cytoplasm. The catalysed reaction is ATP + H2O + a folded polypeptide = ADP + phosphate + an unfolded polypeptide.. Functionally, together with its co-chaperonin GroES, plays an essential role in assisting protein folding. The GroEL-GroES system forms a nano-cage that allows encapsulation of the non-native substrate proteins and provides a physical environment optimized to promote and accelerate protein folding. The sequence is that of Chaperonin GroEL from Serratia ficaria.